A 341-amino-acid polypeptide reads, in one-letter code: Glucokinase (341 aa).

7–12 contributes to the ATP binding site; that stretch reads GDIGGT.

The protein belongs to the bacterial glucokinase family.

The protein resides in the cytoplasm. The enzyme catalyses D-glucose + ATP = D-glucose 6-phosphate + ADP + H(+). The sequence is that of Glucokinase from Nostoc punctiforme (strain ATCC 29133 / PCC 73102).